The sequence spans 25 residues: Caerin-2.3 (25 aa).

In terms of tissue distribution, expressed by the skin parotoid and/or rostral glands.

The protein resides in the secreted. In terms of biological role, acts as a male sex pheromone that attracts females. Has no antimicrobial activity. The protein is Caerin-2.3 of Ranoidea caerulea (Green tree frog).